The sequence spans 627 residues: tRNA uridine 5-carboxymethylaminomethyl modification enzyme MnmG (627 aa).

Residues 13-18 (GGGHAG), valine 125, and serine 180 each bind FAD. Residue 274 to 288 (GPRYCPSIEDKVVRF) participates in NAD(+) binding. FAD is bound at residue glutamine 371.

It belongs to the MnmG family. Homodimer. Heterotetramer of two MnmE and two MnmG subunits. FAD is required as a cofactor.

It is found in the cytoplasm. Functionally, NAD-binding protein involved in the addition of a carboxymethylaminomethyl (cmnm) group at the wobble position (U34) of certain tRNAs, forming tRNA-cmnm(5)s(2)U34. The chain is tRNA uridine 5-carboxymethylaminomethyl modification enzyme MnmG from Francisella tularensis subsp. novicida (strain U112).